The primary structure comprises 259 residues: Putative zinc metalloprotease Rip2 (259 aa).

2 consecutive transmembrane segments (helical) span residues 14–34 and 39–59; these read PIFLGLLGLTAVGGALAWLAG and PLAYAGVFVMVIAGWLVSLCL. Zn(2+) is bound at residue histidine 60. Glutamate 61 is a catalytic residue. A Zn(2+)-binding site is contributed by histidine 64. The next 4 helical transmembrane spans lie at 97 to 117, 128 to 148, 156 to 176, and 215 to 235; these read GLPMLFIALGGIGLPGAAVYV, TLVSLAGPTVNLALAMLLLAA, IHAVLWAGVAFLAFLQLTALV, and LVLFLAPTLNGWFFGVVYWLF.

This sequence belongs to the peptidase M50B family. Requires Zn(2+) as cofactor.

Its subcellular location is the cell membrane. This is Putative zinc metalloprotease Rip2 (rip2) from Mycobacterium tuberculosis (strain ATCC 35801 / TMC 107 / Erdman).